The following is a 720-amino-acid chain: 1,4-alpha-glucan branching enzyme GlgB 2 (720 aa).

The Nucleophile role is filled by Asp398. Residue Glu451 is the Proton donor of the active site.

This sequence belongs to the glycosyl hydrolase 13 family. GlgB subfamily. Monomer.

It carries out the reaction Transfers a segment of a (1-&gt;4)-alpha-D-glucan chain to a primary hydroxy group in a similar glucan chain.. The protein operates within glycan biosynthesis; glycogen biosynthesis. In terms of biological role, catalyzes the formation of the alpha-1,6-glucosidic linkages in glycogen by scission of a 1,4-alpha-linked oligosaccharide from growing alpha-1,4-glucan chains and the subsequent attachment of the oligosaccharide to the alpha-1,6 position. The chain is 1,4-alpha-glucan branching enzyme GlgB 2 from Xanthomonas oryzae pv. oryzae (strain KACC10331 / KXO85).